Consider the following 490-residue polypeptide: Tegument protein VP16 (490 aa).

Residues 11 to 35 (DADGVSPPPPRPAGGPKNTPAAPPL) form a disordered region. Residues Ser16, Ser351, Ser411, and Ser453 each carry the phosphoserine modification. The segment at 411–490 (STTAPITDVS…DAMGIDDFGG (80 aa)) is transcriptional activation.

The protein belongs to the herpesviridae tegument protein VP16 protein family. As to quaternary structure, interacts with VP22. Interacts with gH (via C-terminus). Interacts with the virion host shutoff protein (vhs). Interacts with VP11/12. Associates with the VP16-induced complex; binding to host HCFC1 activates VP16 for association with the octamer motif-binding host protein POU2F1, to form a multiprotein-DNA complex responsible for activating transcription of the viral immediate early genes.

Its subcellular location is the virion tegument. The protein resides in the host nucleus. Its function is as follows. Transcriptional activator of immediate-early (IE) gene products (alpha genes). Acts as a key activator of lytic infection by initiating the lytic program through the assembly of the transcriptional regulatory VP16-induced complex composed of VP16 and two cellular factors, HCFC1 and POU2F 1. VP16-induced complex represents a regulatory switch: when it is on, it promotes IE-gene expression and thus lytic infection, and when it is off, it limits IE-gene transcription favoring latent infection. In terms of biological role, may play a role in the aggregation of tegument proteins around nucleocapsids during virus morphogenesis. The polypeptide is Tegument protein VP16 (Human herpesvirus 2 (strain 333) (HHV-2)).